The primary structure comprises 178 residues: Large ribosomal subunit protein uL6 (178 aa).

Belongs to the universal ribosomal protein uL6 family. In terms of assembly, part of the 50S ribosomal subunit.

Functionally, this protein binds to the 23S rRNA, and is important in its secondary structure. It is located near the subunit interface in the base of the L7/L12 stalk, and near the tRNA binding site of the peptidyltransferase center. The polypeptide is Large ribosomal subunit protein uL6 (Campylobacter fetus subsp. fetus (strain 82-40)).